The chain runs to 46 residues: MALRSIKSIAGSCLCSRQRRCGSSAAIFPEGIFRCLSPKFGQEFPE.

Interacts with histone H2B. Also interacts with chromatin-binding proteins HMGN1 and HMGN3.

It is found in the nucleus. The protein localises to the cytoplasm. Functionally, plays a role in transcription regulation. The chain is Transcriptional regulator SEHBP from Homo sapiens (Human).